Consider the following 389-residue polypeptide: Succinate--CoA ligase [ADP-forming] subunit beta (389 aa).

Positions 9-244 (KEIFRSMGVA…LDEEDPKEIE (236 aa)) constitute an ATP-grasp domain. Residues Lys46, 53-55 (GRG), Glu99, Cys102, and Glu107 each bind ATP. The Mg(2+) site is built by Asn199 and Asp213. Substrate is bound by residues Asn264 and 321-323 (GIM).

It belongs to the succinate/malate CoA ligase beta subunit family. In terms of assembly, heterotetramer of two alpha and two beta subunits. Mg(2+) is required as a cofactor.

The catalysed reaction is succinate + ATP + CoA = succinyl-CoA + ADP + phosphate. The enzyme catalyses GTP + succinate + CoA = succinyl-CoA + GDP + phosphate. It participates in carbohydrate metabolism; tricarboxylic acid cycle; succinate from succinyl-CoA (ligase route): step 1/1. In terms of biological role, succinyl-CoA synthetase functions in the citric acid cycle (TCA), coupling the hydrolysis of succinyl-CoA to the synthesis of either ATP or GTP and thus represents the only step of substrate-level phosphorylation in the TCA. The beta subunit provides nucleotide specificity of the enzyme and binds the substrate succinate, while the binding sites for coenzyme A and phosphate are found in the alpha subunit. The sequence is that of Succinate--CoA ligase [ADP-forming] subunit beta from Macrococcus caseolyticus (strain JCSC5402) (Macrococcoides caseolyticum).